A 496-amino-acid polypeptide reads, in one-letter code: Glycylpeptide N-tetradecanoyltransferase 1 (496 aa).

The disordered stretch occupies residues 1–81 (MADESETAVK…DSTQDQPVKM (81 aa)). Serine 31 and serine 47 each carry phosphoserine. Residues 55-66 (KKKKKKQKKKKE) are compositionally biased toward basic residues. A Phosphoserine modification is found at serine 83. Tetradecanoyl-CoA-binding residues include glutamine 118, phenylalanine 119, tryptophan 120, phenylalanine 247, leucine 248, cysteine 249, valine 250, serine 256, arginine 258, valine 259, and alanine 260.

This sequence belongs to the NMT family.

The protein localises to the cytoplasm. It localises to the cytosol. Its subcellular location is the membrane. The catalysed reaction is N-terminal glycyl-[protein] + tetradecanoyl-CoA = N-tetradecanoylglycyl-[protein] + CoA + H(+). It catalyses the reaction N-terminal glycyl-L-lysyl-[protein] + tetradecanoyl-CoA = N-terminal glycyl-(N(6)-tetradecanoyl)-L-lysyl-[protein] + CoA + H(+). Functionally, adds a myristoyl group to the N-terminal glycine residue of certain cellular and viral proteins. Also able to mediate N-terminal lysine myristoylation of proteins: catalyzes myristoylation of ARF6 on both 'Gly-2' and 'Lys-3'. Lysine myristoylation is required to maintain ARF6 on membranes during the GTPase cycle. This is Glycylpeptide N-tetradecanoyltransferase 1 (Nmt1) from Rattus norvegicus (Rat).